A 101-amino-acid chain; its full sequence is Urease subunit beta (101 aa).

It belongs to the urease beta subunit family. As to quaternary structure, heterotrimer of UreA (gamma), UreB (beta) and UreC (alpha) subunits. Three heterotrimers associate to form the active enzyme.

The protein localises to the cytoplasm. The enzyme catalyses urea + 2 H2O + H(+) = hydrogencarbonate + 2 NH4(+). It functions in the pathway nitrogen metabolism; urea degradation; CO(2) and NH(3) from urea (urease route): step 1/1. This Stutzerimonas stutzeri (strain A1501) (Pseudomonas stutzeri) protein is Urease subunit beta.